The primary structure comprises 367 residues: UDP-N-acetylglucosamine--N-acetylmuramyl-(pentapeptide) pyrophosphoryl-undecaprenol N-acetylglucosamine transferase (367 aa).

UDP-N-acetyl-alpha-D-glucosamine is bound by residues 15–17, N126, R169, S197, and Q298; that span reads TGG.

It belongs to the glycosyltransferase 28 family. MurG subfamily.

The protein localises to the cell inner membrane. The catalysed reaction is di-trans,octa-cis-undecaprenyl diphospho-N-acetyl-alpha-D-muramoyl-L-alanyl-D-glutamyl-meso-2,6-diaminopimeloyl-D-alanyl-D-alanine + UDP-N-acetyl-alpha-D-glucosamine = di-trans,octa-cis-undecaprenyl diphospho-[N-acetyl-alpha-D-glucosaminyl-(1-&gt;4)]-N-acetyl-alpha-D-muramoyl-L-alanyl-D-glutamyl-meso-2,6-diaminopimeloyl-D-alanyl-D-alanine + UDP + H(+). The protein operates within cell wall biogenesis; peptidoglycan biosynthesis. Cell wall formation. Catalyzes the transfer of a GlcNAc subunit on undecaprenyl-pyrophosphoryl-MurNAc-pentapeptide (lipid intermediate I) to form undecaprenyl-pyrophosphoryl-MurNAc-(pentapeptide)GlcNAc (lipid intermediate II). The sequence is that of UDP-N-acetylglucosamine--N-acetylmuramyl-(pentapeptide) pyrophosphoryl-undecaprenol N-acetylglucosamine transferase from Bradyrhizobium sp. (strain BTAi1 / ATCC BAA-1182).